Consider the following 510-residue polypeptide: 2,3-bisphosphoglycerate-independent phosphoglycerate mutase (510 aa).

The Mn(2+) site is built by Asp-12 and Ser-62. The active-site Phosphoserine intermediate is Ser-62. Residues His-123, Arg-153–Asp-154, Arg-185, Arg-191, Arg-260–Arg-263, and Lys-335 contribute to the substrate site. 5 residues coordinate Mn(2+): Asp-402, His-406, Asp-443, His-444, and His-461.

It belongs to the BPG-independent phosphoglycerate mutase family. Monomer. It depends on Mn(2+) as a cofactor.

The catalysed reaction is (2R)-2-phosphoglycerate = (2R)-3-phosphoglycerate. It participates in carbohydrate degradation; glycolysis; pyruvate from D-glyceraldehyde 3-phosphate: step 3/5. In terms of biological role, catalyzes the interconversion of 2-phosphoglycerate and 3-phosphoglycerate. This is 2,3-bisphosphoglycerate-independent phosphoglycerate mutase from Listeria monocytogenes serotype 4b (strain F2365).